The sequence spans 1219 residues: Pheromone-regulated membrane protein 10 (1219 aa).

The segment covering 1-11 (MMRTQSDEHVA) has biased composition (basic and acidic residues). 4 disordered regions span residues 1-273 (MMRT…IERE), 303-490 (LASF…DPFT), 503-533 (HDDD…EDYV), and 555-713 (EGNK…RPVK). The span at 42-53 (DENDDGHDDSDE) shows a compositional bias: acidic residues. Residues 57 to 68 (SVVIPTPSVVIV) are compositionally biased toward low complexity. Residues 104–115 (LKSPGTPTTYSP) are compositionally biased toward polar residues. The span at 136 to 155 (GSSLSSTTLMNTLLNSSGLG) shows a compositional bias: low complexity. 2 stretches are compositionally biased toward acidic residues: residues 159–171 (TESE…DEEV) and 219–231 (QEEE…DDDG). Basic and acidic residues-rich tracts occupy residues 259–273 (ADRA…IERE), 330–346 (DDQR…RREN), and 395–421 (LDRR…EKER). Over residues 422–432 (QHHHHNHHHHH) the composition is skewed to basic residues. A compositionally biased stretch (polar residues) spans 435–446 (ETGPNTGASSPF). Residues 448–470 (EEEKDREAEEAEILRDQARDLVN) show a composition bias toward basic and acidic residues. The segment covering 565-577 (TTVGDGTSTGDVS) has biased composition (low complexity). Over residues 598-615 (KSKTKTTQKLGLKKKKKE) the composition is skewed to basic residues. Residues 616–641 (LLKIIEDQRKEKEENKKRPKWYDKSR) are compositionally biased toward basic and acidic residues. Residues 642-652 (STSPSPGGTPA) are compositionally biased toward low complexity. Over residues 653-673 (PHHHHHIPGLHLHHHTKGHQR) the composition is skewed to basic residues. Residues 693–713 (GGDKPPDRPRSLRSEALRPVK) show a composition bias toward basic and acidic residues. 10 helical membrane-spanning segments follow: residues 864-884 (PPWL…PYAF), 888-908 (WADI…QIIV), 918-938 (VFEV…GTIS), 945-965 (FCFA…YIVL), 983-1003 (MFYA…GAVV), 1021-1041 (LDPL…ALVN), 1049-1069 (PSML…GANI), 1075-1095 (SSYL…NLYS), 1100-1120 (GLAF…GVAS), and 1184-1204 (LGFT…AATL).

The protein belongs to the ThrE exporter (TC 2.A.79) family.

It localises to the membrane. The polypeptide is Pheromone-regulated membrane protein 10 (Yarrowia lipolytica (strain CLIB 122 / E 150) (Yeast)).